Consider the following 20-residue polypeptide: Lysozyme (20 aa).

In terms of assembly, monomer.

It is found in the secreted. It carries out the reaction Hydrolysis of (1-&gt;4)-beta-linkages between N-acetylmuramic acid and N-acetyl-D-glucosamine residues in a peptidoglycan and between N-acetyl-D-glucosamine residues in chitodextrins.. Has bacteriolytic activity. This is Lysozyme from Lysobacter sp. (strain XL1).